The chain runs to 60 residues: Single-pass membrane and coiled-coil domain-containing protein 4 homolog (60 aa).

Positions 1–23 (MRKLRGGQTKETRKQRQERKEEN) are disordered. Positions 8-23 (QTKETRKQRQERKEEN) are enriched in basic and acidic residues. Positions 8–33 (QTKETRKQRQERKEENLKIQQQMKTI) form a coiled coil. Residues 31–51 (KTIVLPTIGVIFLCIVVYVFL) traverse the membrane as a helical segment.

This sequence belongs to the SMCO4 family.

Its subcellular location is the membrane. The polypeptide is Single-pass membrane and coiled-coil domain-containing protein 4 homolog (Anopheles gambiae (African malaria mosquito)).